Consider the following 241-residue polypeptide: 2-C-methyl-D-erythritol 4-phosphate cytidylyltransferase (241 aa).

It belongs to the IspD/TarI cytidylyltransferase family. IspD subfamily. In terms of assembly, homodimer.

The enzyme catalyses 2-C-methyl-D-erythritol 4-phosphate + CTP + H(+) = 4-CDP-2-C-methyl-D-erythritol + diphosphate. It participates in isoprenoid biosynthesis; isopentenyl diphosphate biosynthesis via DXP pathway; isopentenyl diphosphate from 1-deoxy-D-xylulose 5-phosphate: step 2/6. Catalyzes the formation of 4-diphosphocytidyl-2-C-methyl-D-erythritol from CTP and 2-C-methyl-D-erythritol 4-phosphate (MEP). This is 2-C-methyl-D-erythritol 4-phosphate cytidylyltransferase from Yersinia pseudotuberculosis serotype IB (strain PB1/+).